The sequence spans 439 residues: Glutamine synthetase (439 aa).

The GS beta-grasp domain maps to 12-93 (SKIKFVQLVF…VYGFIYKDNK (82 aa)). Residues 99 to 439 (PRGILKRALE…EWELERYFFL (341 aa)) form the GS catalytic domain. Residues E122 and E124 each contribute to the Mg(2+) site. E172 lines the ATP pocket. Mg(2+) is bound by residues E177 and E184. G229 contacts L-glutamate. H233 is a binding site for Mg(2+). ATP is bound by residues 235 to 237 (HIS) and S237. 3 residues coordinate L-glutamate: R283, E289, and R301. The ATP site is built by R301, R306, and K313. Residue E318 coordinates Mg(2+). R320 contacts L-glutamate.

Belongs to the glutamine synthetase family. Oligomer of 12 subunits arranged in the form of two hexagons. Mg(2+) is required as a cofactor.

The protein localises to the cytoplasm. It catalyses the reaction L-glutamate + NH4(+) + ATP = L-glutamine + ADP + phosphate + H(+). Functionally, probably involved in nitrogen metabolism via ammonium assimilation. Catalyzes the ATP-dependent biosynthesis of glutamine from glutamate and ammonia. In Pyrococcus furiosus (strain ATCC 43587 / DSM 3638 / JCM 8422 / Vc1), this protein is Glutamine synthetase.